The sequence spans 134 residues: Phosphoribosyl-AMP cyclohydrolase (134 aa).

Mg(2+) is bound at residue aspartate 77. Residue cysteine 78 coordinates Zn(2+). 2 residues coordinate Mg(2+): aspartate 79 and aspartate 81. Zn(2+)-binding residues include cysteine 95 and cysteine 102.

Belongs to the PRA-CH family. Homodimer. It depends on Mg(2+) as a cofactor. The cofactor is Zn(2+).

The protein localises to the cytoplasm. The enzyme catalyses 1-(5-phospho-beta-D-ribosyl)-5'-AMP + H2O = 1-(5-phospho-beta-D-ribosyl)-5-[(5-phospho-beta-D-ribosylamino)methylideneamino]imidazole-4-carboxamide. The protein operates within amino-acid biosynthesis; L-histidine biosynthesis; L-histidine from 5-phospho-alpha-D-ribose 1-diphosphate: step 3/9. Catalyzes the hydrolysis of the adenine ring of phosphoribosyl-AMP. This is Phosphoribosyl-AMP cyclohydrolase from Pseudomonas aeruginosa (strain LESB58).